Reading from the N-terminus, the 230-residue chain is MKGILGKKVGMSQLFTTEGIAISVSIIEVPENIVTKIITKEKNSYNAIQLAAFDKKQSRFLKPEIGHFAKANTKPKRFIKEFRDFQGYKLGQTVDVSIFSPGEFVDVTGTSKGKGFAGTIKRYNQAIGPRSHGGGGGSKPIRQTGSLGDISGNKVVKGMTMPGRLGHEKVTKQSLEIIKVDKENNLLVLKGSVPGPKKSFLVIKSAIKKPNPKNPVSLFVPNSDKEVKNE.

2 disordered regions span residues 125–149 (QAIG…SLGD) and 210–230 (PNPK…VKNE).

The protein belongs to the universal ribosomal protein uL3 family. As to quaternary structure, part of the 50S ribosomal subunit. Forms a cluster with proteins L14 and L19.

In terms of biological role, one of the primary rRNA binding proteins, it binds directly near the 3'-end of the 23S rRNA, where it nucleates assembly of the 50S subunit. This Mesomycoplasma hyopneumoniae (strain 232) (Mycoplasma hyopneumoniae) protein is Large ribosomal subunit protein uL3.